We begin with the raw amino-acid sequence, 116 residues long: Iron-sulfur cluster insertion protein ErpA (116 aa).

Positions 44, 108, and 110 each coordinate iron-sulfur cluster.

Belongs to the HesB/IscA family. Homodimer. It depends on iron-sulfur cluster as a cofactor.

Functionally, required for insertion of 4Fe-4S clusters for at least IspG. The polypeptide is Iron-sulfur cluster insertion protein ErpA (Shewanella piezotolerans (strain WP3 / JCM 13877)).